A 377-amino-acid polypeptide reads, in one-letter code: Histidinol-phosphate aminotransferase (377 aa).

K232 carries the N6-(pyridoxal phosphate)lysine modification.

Belongs to the class-II pyridoxal-phosphate-dependent aminotransferase family. Histidinol-phosphate aminotransferase subfamily. As to quaternary structure, homodimer. Pyridoxal 5'-phosphate is required as a cofactor.

It catalyses the reaction L-histidinol phosphate + 2-oxoglutarate = 3-(imidazol-4-yl)-2-oxopropyl phosphate + L-glutamate. It functions in the pathway amino-acid biosynthesis; L-histidine biosynthesis; L-histidine from 5-phospho-alpha-D-ribose 1-diphosphate: step 7/9. This chain is Histidinol-phosphate aminotransferase, found in Mycobacterium sp. (strain KMS).